The sequence spans 968 residues: Ribonuclease E (968 aa).

Residues 39 to 119 (SNIYKGKITR…GTKGAALTTF (81 aa)) enclose the S1 motif domain. Mg(2+)-binding residues include D303 and D346. Zn(2+) contacts are provided by C404 and C407. The interval 404–407 (CPRC) is required for zinc-mediated homotetramerization and catalytic activity. Residues 947–968 (IKNSAGAHSATNFSTSPVKKSE) form a disordered region. Residues 955 to 968 (SATNFSTSPVKKSE) show a composition bias toward polar residues.

Belongs to the RNase E/G family. RNase E subfamily. Component of the RNA degradosome, which is a multiprotein complex involved in RNA processing and mRNA degradation. Within the RNA degradosome, RNase E assembles into a homotetramer formed by a dimer of dimers. The cofactor is Zn(2+). Mg(2+) serves as cofactor.

The protein resides in the cytoplasm. It is found in the cell inner membrane. It catalyses the reaction Endonucleolytic cleavage of single-stranded RNA in A- and U-rich regions.. Functionally, endoribonuclease that plays a central role in RNA processing and decay. Required for the maturation of 5S and 16S rRNAs and the majority of tRNAs. Also involved in the degradation of most mRNAs. The polypeptide is Ribonuclease E (Buchnera aphidicola subsp. Schizaphis graminum (strain Sg)).